Consider the following 889-residue polypeptide: DNA-directed RNA polymerase subunit Rpo1N (889 aa).

8 residues coordinate Zn(2+): C62, C65, C72, H75, C102, C105, C149, and C152. The Mg(2+) site is built by D466, D468, and D470.

The protein belongs to the RNA polymerase beta' chain family. Part of the RNA polymerase complex. It depends on Mg(2+) as a cofactor. Zn(2+) serves as cofactor.

It is found in the cytoplasm. The enzyme catalyses RNA(n) + a ribonucleoside 5'-triphosphate = RNA(n+1) + diphosphate. Functionally, DNA-dependent RNA polymerase (RNAP) catalyzes the transcription of DNA into RNA using the four ribonucleoside triphosphates as substrates. Forms the clamp head domain. The protein is DNA-directed RNA polymerase subunit Rpo1N of Methanococcus vannielii (strain ATCC 35089 / DSM 1224 / JCM 13029 / OCM 148 / SB).